A 249-amino-acid chain; its full sequence is Large ribosomal subunit protein uL1 (249 aa).

It belongs to the universal ribosomal protein uL1 family. As to quaternary structure, part of the 50S ribosomal subunit.

Functionally, binds directly to 23S rRNA. The L1 stalk is quite mobile in the ribosome, and is involved in E site tRNA release. Its function is as follows. Protein L1 is also a translational repressor protein, it controls the translation of the L11 operon by binding to its mRNA. In Orientia tsutsugamushi (strain Ikeda) (Rickettsia tsutsugamushi), this protein is Large ribosomal subunit protein uL1.